The chain runs to 385 residues: Protein pelota homolog (385 aa).

Lysine 162 participates in a covalent cross-link: Glycyl lysine isopeptide (Lys-Gly) (interchain with G-Cter in SUMO2). Serine 374, serine 380, serine 381, and serine 382 each carry phosphoserine.

It belongs to the eukaryotic release factor 1 family. Pelota subfamily. Component of the Pelota-HBS1L complex, also named Dom34-Hbs1 complex, composed of PELO and HBS1L. Interacts with PINK1. Interacts with ABCE1. Interacts with CNOT4. A divalent metal cation is required as a cofactor.

The protein resides in the cytoplasm. In terms of biological role, component of the Pelota-HBS1L complex, a complex that recognizes stalled ribosomes and triggers the No-Go Decay (NGD) pathway. In the Pelota-HBS1L complex, PELO recognizes ribosomes stalled at the 3' end of an mRNA and engages stalled ribosomes by destabilizing mRNA in the mRNA channel. Following mRNA extraction from stalled ribosomes by the SKI complex, the Pelota-HBS1L complex promotes recruitment of ABCE1, which drives the disassembly of stalled ribosomes, followed by degradation of damaged mRNAs as part of the NGD pathway. As part of the PINK1-regulated signaling, upon mitochondrial damage is recruited to the ribosome/mRNA-ribonucleoprotein complex associated to mitochondrial outer membrane thereby enabling the recruitment of autophagy receptors and induction of mitophagy. This is Protein pelota homolog (PELO) from Bos taurus (Bovine).